Consider the following 600-residue polypeptide: Dihydroxy-acid dehydratase (600 aa).

Residue Asp-82 participates in Mg(2+) binding. Cys-123 is a [2Fe-2S] cluster binding site. Mg(2+) contacts are provided by Asp-124 and Lys-125. Lys-125 is modified (N6-carboxylysine). Cys-192 is a binding site for [2Fe-2S] cluster. Glu-489 lines the Mg(2+) pocket. The active-site Proton acceptor is Ser-515.

Belongs to the IlvD/Edd family. As to quaternary structure, homodimer. [2Fe-2S] cluster serves as cofactor. Mg(2+) is required as a cofactor.

It catalyses the reaction (2R)-2,3-dihydroxy-3-methylbutanoate = 3-methyl-2-oxobutanoate + H2O. The enzyme catalyses (2R,3R)-2,3-dihydroxy-3-methylpentanoate = (S)-3-methyl-2-oxopentanoate + H2O. Its pathway is amino-acid biosynthesis; L-isoleucine biosynthesis; L-isoleucine from 2-oxobutanoate: step 3/4. The protein operates within amino-acid biosynthesis; L-valine biosynthesis; L-valine from pyruvate: step 3/4. Its function is as follows. Functions in the biosynthesis of branched-chain amino acids. Catalyzes the dehydration of (2R,3R)-2,3-dihydroxy-3-methylpentanoate (2,3-dihydroxy-3-methylvalerate) into 2-oxo-3-methylpentanoate (2-oxo-3-methylvalerate) and of (2R)-2,3-dihydroxy-3-methylbutanoate (2,3-dihydroxyisovalerate) into 2-oxo-3-methylbutanoate (2-oxoisovalerate), the penultimate precursor to L-isoleucine and L-valine, respectively. The polypeptide is Dihydroxy-acid dehydratase (Phocaeicola vulgatus (strain ATCC 8482 / DSM 1447 / JCM 5826 / CCUG 4940 / NBRC 14291 / NCTC 11154) (Bacteroides vulgatus)).